We begin with the raw amino-acid sequence, 194 residues long: Calcium-binding protein J (194 aa).

2 consecutive EF-hand domains span residues 62-97 (WDKDLLIQLFKLFDTDCNGILDFKEFVTSLYIMTKA) and 98-133 (PVVEKLSLLFDLFDKDQSGHLEVDEVEKLIGVAVAC). Ca(2+) contacts are provided by Asp75, Asp77, Asn79, Glu86, Asp111, Asp113, Ser115, His117, and Glu122.

It belongs to the recoverin family.

This is Calcium-binding protein J (cbpJ) from Dictyostelium discoideum (Social amoeba).